The sequence spans 551 residues: Cation/acetate symporter ActP (551 aa).

The next 14 membrane-spanning stretches (helical) occupy residues 8–28, 35–55, 78–98, 105–125, 151–171, 185–205, 208–228, 264–284, 305–325, 357–377, 406–426, 430–450, 465–485, and 496–516; these read ALAA…TGAV, WQAI…TYWA, GLAI…SALV, GLIY…LIAE, LSAC…MVGA, VAVV…GMLA, WVQI…AFMV, ISAL…PHIL, GFMG…IMLV, LFLG…VAGL, VSKI…ILFE, IAFM…PIIL, VGGW…PTIW, and FPYE…IWVF.

The protein belongs to the sodium:solute symporter (SSF) (TC 2.A.21) family.

It localises to the cell inner membrane. In terms of biological role, transports acetate. This is Cation/acetate symporter ActP from Klebsiella pneumoniae (strain 342).